We begin with the raw amino-acid sequence, 360 residues long: Photosystem II protein D1 (360 aa).

The next 3 membrane-spanning stretches (helical) occupy residues 29-46, 118-133, and 142-156; these read YIGW…TATT, HFLL…EWEF, and WISV…AASA. Histidine 118 contacts chlorophyll a. Residue tryptophan 126 coordinates pheophytin a. 2 residues coordinate [CaMn4O5] cluster: aspartate 170 and glutamate 189. The chain crosses the membrane as a helical span at residues 197–218; sequence FHQLGVAGVFGGSLFSAMHGSL. Residue histidine 198 coordinates chlorophyll a. A quinone-binding positions include histidine 215 and 264–265; that span reads SF. Histidine 215 provides a ligand contact to Fe cation. Histidine 272 contacts Fe cation. The helical transmembrane segment at 274–288 threads the bilayer; the sequence is FLGLWPVVGIWFTAL. [CaMn4O5] cluster-binding residues include histidine 332, glutamate 333, aspartate 342, and alanine 344. Residues 345 to 360 constitute a propeptide that is removed on maturation; that stretch reads AGESLPVALTAPAVNG.

It belongs to the reaction center PufL/M/PsbA/D family. PSII is composed of 1 copy each of membrane proteins PsbA, PsbB, PsbC, PsbD, PsbE, PsbF, PsbH, PsbI, PsbJ, PsbK, PsbL, PsbM, PsbT, PsbX, PsbY, PsbZ, Psb30/Ycf12, at least 3 peripheral proteins of the oxygen-evolving complex and a large number of cofactors. It forms dimeric complexes. The D1/D2 heterodimer binds P680, chlorophylls that are the primary electron donor of PSII, and subsequent electron acceptors. It shares a non-heme iron and each subunit binds pheophytin, quinone, additional chlorophylls, carotenoids and lipids. D1 provides most of the ligands for the Mn4-Ca-O5 cluster of the oxygen-evolving complex (OEC). There is also a Cl(-1) ion associated with D1 and D2, which is required for oxygen evolution. The PSII complex binds additional chlorophylls, carotenoids and specific lipids. serves as cofactor. In terms of processing, tyr-161 forms a radical intermediate that is referred to as redox-active TyrZ, YZ or Y-Z. Post-translationally, C-terminally processed by CTPA; processing is essential to allow assembly of the oxygen-evolving complex and thus photosynthetic growth.

The protein localises to the plastid. It is found in the chloroplast thylakoid membrane. The catalysed reaction is 2 a plastoquinone + 4 hnu + 2 H2O = 2 a plastoquinol + O2. In terms of biological role, photosystem II (PSII) is a light-driven water:plastoquinone oxidoreductase that uses light energy to abstract electrons from H(2)O, generating O(2) and a proton gradient subsequently used for ATP formation. It consists of a core antenna complex that captures photons, and an electron transfer chain that converts photonic excitation into a charge separation. The D1/D2 (PsbA/PsbD) reaction center heterodimer binds P680, the primary electron donor of PSII as well as several subsequent electron acceptors. The protein is Photosystem II protein D1 of Rhodomonas salina (Cryptomonas salina).